The following is a 133-amino-acid chain: Hemoglobin subunit alpha-2 (133 aa).

Residues 1–133 (NVKAVWEHVK…VKNVLTSRYR (133 aa)) enclose the Globin domain. O2 is bound at residue His-50. Residue His-79 participates in heme b binding.

It belongs to the globin family. Minor hemoglobin is a heterotetramer of two alpha-2 chains and two beta-2 chains. Red blood cells.

In terms of biological role, involved in oxygen transport from the lung to the various peripheral tissues. The polypeptide is Hemoglobin subunit alpha-2 (Pleurodeles waltl (Iberian ribbed newt)).